Consider the following 132-residue polypeptide: MIIEGEVVSGLGEGRYFLSLPPYKEIFKKILGFEPYEGTLNLKLDREFDINKFKYIETEDFEFNGKRFFGVKVLPIKILIGNKKIDGAIVVPKKTYHSSEIIEIIAPMKLREQFNLKDGDVIKILIKGDKDE.

10–15 (GLGEGR) contacts CDP. The Mg(2+) site is built by Thr39 and Asn41. FMN contacts are provided by Thr95, Tyr96, and Glu103. Residue 108–111 (MKLR) participates in CDP binding.

As to quaternary structure, monomer. Mg(2+) serves as cofactor.

The enzyme catalyses riboflavin + CTP = CDP + FMN + H(+). It participates in cofactor biosynthesis; FMN biosynthesis; FMN from riboflavin (CTP route): step 1/1. In terms of biological role, catalyzes the CTP-dependent phosphorylation of riboflavin (vitamin B2) to form flavin mononucleotide (FMN). Can also utilize UTP as the phosphate donor, although less efficiently, and it is unclear if ATP and GTP can also serve as substrates or not. This Methanocaldococcus jannaschii (strain ATCC 43067 / DSM 2661 / JAL-1 / JCM 10045 / NBRC 100440) (Methanococcus jannaschii) protein is Riboflavin kinase (ribK).